Consider the following 100-residue polypeptide: Cystatin-B (100 aa).

A Cystatin domain is found at 6–88 (GGISAPLDAD…GGGLELSGMQ (83 aa)). Positions 48–52 (QIVSG) match the Secondary area of contact motif.

The protein belongs to the cystatin family. Widely expressed. Highly expressed in liver and to a lesser extent in spleen, gill, brain, intestine, kidney, head kidney and blood. Lowest level in muscle.

It localises to the cytoplasm. In terms of biological role, thiol protease inhibitor. Has papain inhibitory activity in vitro. May be involved in immune responses against invading Gram-negative bacteria. This Oplegnathus fasciatus (Barred knifejaw) protein is Cystatin-B.